The chain runs to 227 residues: Urease subunit gamma/beta (227 aa).

The interval 1 to 101 (MRLTPTERDR…LAVVADPVGG (101 aa)) is urease gamma. Residues 102-227 (GGLGDDAPGA…AACGYLGADR (126 aa)) are urease beta.

The protein in the N-terminal section; belongs to the urease gamma subunit family. This sequence in the C-terminal section; belongs to the urease beta subunit family. As to quaternary structure, heterohexamer of 3 UreC (alpha) and 3 UreAB (gamma/beta) subunits.

The protein resides in the cytoplasm. It catalyses the reaction urea + 2 H2O + H(+) = hydrogencarbonate + 2 NH4(+). The protein operates within nitrogen metabolism; urea degradation; CO(2) and NH(3) from urea (urease route): step 1/1. The polypeptide is Urease subunit gamma/beta (Streptomyces coelicolor (strain ATCC BAA-471 / A3(2) / M145)).